Consider the following 208-residue polypeptide: Large ribosomal subunit protein uL4 (208 aa).

The interval 51-79 (AKERAEVSFSTKKLKKQKGTGGARAGSRK) is disordered.

This sequence belongs to the universal ribosomal protein uL4 family. In terms of assembly, part of the 50S ribosomal subunit.

Its function is as follows. One of the primary rRNA binding proteins, this protein initially binds near the 5'-end of the 23S rRNA. It is important during the early stages of 50S assembly. It makes multiple contacts with different domains of the 23S rRNA in the assembled 50S subunit and ribosome. Functionally, forms part of the polypeptide exit tunnel. This Cytophaga hutchinsonii (strain ATCC 33406 / DSM 1761 / CIP 103989 / NBRC 15051 / NCIMB 9469 / D465) protein is Large ribosomal subunit protein uL4.